Reading from the N-terminus, the 471-residue chain is MTDLPDSTRWQLWIVAFGFFMQSLDTTIVNTALPSMAQSLGESPLHMHMVIVSYVLTVAVMLPASGWLADKVGVRNIFFTAIVLFTLGSLFCALSGTLNELLLARALQGVGGAMMVPVGRLTVMKIVPREQYMAAMTFVTLPGQVGPLLGPALGGLLVEYASWHWIFLINIPVGIIGAIATLMLMPNYTMQTRRFDLSGFLLLAVGMAVLTLALDGSKGTGLSPLTIDGLVAVGVVALVLYLLHARNNNRALFSLKLFRTRTFSLGLAGSFAGRIGSGMLPFMTPVFLQIGLGFSPFHAGLMMIPMVLGSMGMKRIVVQVVNRFGYRRVLVATTLGLSLVTLLFMTTALLGWYYVLPFVLFLQGMVNSTRFSSMNTLTLKDLPDNLASSGNSLLSMIMQLSMSIGVTIAGLLLGLFGSQHVSIDSGTTQTVFMYTWLSMALIIALPAFIFARVPNDTHQNVAISRRKRSAQ.

Over 1–11 the chain is Periplasmic; it reads MTDLPDSTRWQ. The helical transmembrane segment at 12 to 32 threads the bilayer; the sequence is LWIVAFGFFMQSLDTTIVNTA. At 33-48 the chain is on the cytoplasmic side; sequence LPSMAQSLGESPLHMH. Residues 49 to 69 form a helical membrane-spanning segment; it reads MVIVSYVLTVAVMLPASGWLA. At 70-76 the chain is on the periplasmic side; that stretch reads DKVGVRN. A helical membrane pass occupies residues 77 to 97; the sequence is IFFTAIVLFTLGSLFCALSGT. At 98–101 the chain is on the cytoplasmic side; the sequence is LNEL. Residues 102 to 124 form a helical membrane-spanning segment; sequence LLARALQGVGGAMMVPVGRLTVM. Over 125–137 the chain is Periplasmic; the sequence is KIVPREQYMAAMT. A helical transmembrane segment spans residues 138 to 158; that stretch reads FVTLPGQVGPLLGPALGGLLV. Over 159 to 164 the chain is Cytoplasmic; that stretch reads EYASWH. Residues 165-185 traverse the membrane as a helical segment; sequence WIFLINIPVGIIGAIATLMLM. At 186-196 the chain is on the periplasmic side; it reads PNYTMQTRRFD. Residues 197–217 traverse the membrane as a helical segment; that stretch reads LSGFLLLAVGMAVLTLALDGS. Residues 218-224 are Cytoplasmic-facing; that stretch reads KGTGLSP. The chain crosses the membrane as a helical span at residues 225–245; it reads LTIDGLVAVGVVALVLYLLHA. The Periplasmic segment spans residues 246–262; it reads RNNNRALFSLKLFRTRT. Residues 263 to 283 form a helical membrane-spanning segment; the sequence is FSLGLAGSFAGRIGSGMLPFM. Over 284–285 the chain is Cytoplasmic; that stretch reads TP. A helical transmembrane segment spans residues 286-306; that stretch reads VFLQIGLGFSPFHAGLMMIPM. Residues 307–341 are Periplasmic-facing; it reads VLGSMGMKRIVVQVVNRFGYRRVLVATTLGLSLVT. Residues 342-362 traverse the membrane as a helical segment; the sequence is LLFMTTALLGWYYVLPFVLFL. The Cytoplasmic segment spans residues 363–395; the sequence is QGMVNSTRFSSMNTLTLKDLPDNLASSGNSLLS. Residues 396–416 form a helical membrane-spanning segment; it reads MIMQLSMSIGVTIAGLLLGLF. The Periplasmic portion of the chain corresponds to 417–430; sequence GSQHVSIDSGTTQT. Residues 431 to 451 traverse the membrane as a helical segment; the sequence is VFMYTWLSMALIIALPAFIFA. At 452 to 471 the chain is on the cytoplasmic side; sequence RVPNDTHQNVAISRRKRSAQ.

It belongs to the major facilitator superfamily. TCR/Tet family.

It is found in the cell inner membrane. The polypeptide is Putative multidrug resistance protein MdtD (Escherichia coli (strain SE11)).